A 627-amino-acid chain; its full sequence is tRNA uridine 5-carboxymethylaminomethyl modification enzyme MnmG (627 aa).

FAD-binding positions include 13-18, valine 125, and serine 180; that span reads GGGHAG. 274-288 serves as a coordination point for NAD(+); sequence GPRYCPSIEDKVVRF. Glutamine 371 provides a ligand contact to FAD.

This sequence belongs to the MnmG family. Homodimer. Heterotetramer of two MnmE and two MnmG subunits. FAD is required as a cofactor.

It is found in the cytoplasm. In terms of biological role, NAD-binding protein involved in the addition of a carboxymethylaminomethyl (cmnm) group at the wobble position (U34) of certain tRNAs, forming tRNA-cmnm(5)s(2)U34. This chain is tRNA uridine 5-carboxymethylaminomethyl modification enzyme MnmG, found in Francisella philomiragia subsp. philomiragia (strain ATCC 25017 / CCUG 19701 / FSC 153 / O#319-036).